The primary structure comprises 198 residues: Ribosomal RNA small subunit methyltransferase G (198 aa).

S-adenosyl-L-methionine contacts are provided by residues Gly-74, Phe-79, 123 to 124, and Arg-136; that span reads IQ.

It belongs to the methyltransferase superfamily. RNA methyltransferase RsmG family.

Its subcellular location is the cytoplasm. It catalyses the reaction guanosine(527) in 16S rRNA + S-adenosyl-L-methionine = N(7)-methylguanosine(527) in 16S rRNA + S-adenosyl-L-homocysteine. Its function is as follows. Specifically methylates the N7 position of guanine in position 527 of 16S rRNA. The sequence is that of Ribosomal RNA small subunit methyltransferase G from Orientia tsutsugamushi (strain Boryong) (Rickettsia tsutsugamushi).